Here is a 281-residue protein sequence, read N- to C-terminus: Transmembrane protein 41A-A (281 aa).

An N-terminal signal peptide occupies residues 1-22 (MRSLVGLVAVIVTATFYLYSLS). The disordered stretch occupies residues 32-56 (HKQSHEGETTDAKDGDEPSEMETAS). Positions 34-47 (QSHEGETTDAKDGD) are enriched in basic and acidic residues. 5 consecutive transmembrane segments (helical) span residues 84-104 (GYVL…AIPG), 107-127 (FLNI…LTCV), 170-190 (LFFF…FLNM), 197-217 (IPVT…NFIC), and 236-256 (WSVV…GALI).

The protein belongs to the TMEM41 family.

The protein localises to the membrane. This Danio rerio (Zebrafish) protein is Transmembrane protein 41A-A (tmem41aa).